The following is a 560-amino-acid chain: Embryonal Fyn-associated substrate (560 aa).

The region spanning threonine 5–alanine 68 is the SH3 domain. Disordered stretches follow at residues valine 176–alanine 219 and alanine 241–glutamate 372. Over residues alanine 198 to arginine 210 the composition is skewed to basic and acidic residues. Position 253 is a phosphotyrosine; by SRC (tyrosine 253). Over residues glycine 259–proline 268 the composition is skewed to pro residues. Short sequence motifs (SH3-binding) lie at residues arginine 304–proline 310 and arginine 334–proline 340. Positions proline 305–proline 315 are enriched in low complexity. Positions proline 351–alanine 361 are enriched in basic and acidic residues. The segment at phenylalanine 437–glycine 487 is divergent helix-loop-helix motif.

Belongs to the CAS family. Phosphorylated on multiple tyrosine residues. Phosphorylated on tyrosines by FYN and SRC. Widely expressed. Higher levels found in placenta and embryo. Lower levels found in brain, brainstem, muscle and lung. No expression in liver and intestine.

In terms of biological role, docking protein which plays a central coordinating role for tyrosine-kinase-based signaling related to cell adhesion. May serve as an activator of SRC and a downstream effector. Interacts with the SH3 domain of FYN and with CRK, SRC, and YES. This Mus musculus (Mouse) protein is Embryonal Fyn-associated substrate (Efs).